A 295-amino-acid polypeptide reads, in one-letter code: Taste receptor type 2 member 120 (295 aa).

Topologically, residues 1–5 (MDLTE) are extracellular. The chain crosses the membrane as a helical span at residues 6-26 (WIVTIIMMIEFLLGNCANFFI). Over 27 to 45 (MVVNAIDCMKRRKISSADR) the chain is Cytoplasmic. Residues 46–66 (IITALAISRIGLLWAMLMNWH) traverse the membrane as a helical segment. At 67 to 83 (SRVYTTDTYSFQVTAFS) the chain is on the extracellular side. Residues 84 to 104 (GIIWAITNHFTTWLGTILSMF) traverse the membrane as a helical segment. Over 105-125 (YLFKIANFSNCLFLHLKRKLD) the chain is Cytoplasmic. A helical transmembrane segment spans residues 126–146 (SVLLVIFLVSSLLVFAYLGVV). Residues 147–177 (NIKKIAWLSVHEGNVTVKSKLMNIASIRDTL) are Extracellular-facing. Asn-160 carries N-linked (GlcNAc...) asparagine glycosylation. Residues 178 to 198 (LFSLINIAPFGISLTCVLLLI) form a helical membrane-spanning segment. Residues 199 to 230 (YSLGKHLKNMKFYGKGCQDQSTMVHIRALQTV) are Cytoplasmic-facing. A helical transmembrane segment spans residues 231 to 251 (VSFLLLYATYSSCVIISGWSI). Residues 252–255 (QNVP) lie on the Extracellular side of the membrane. A helical transmembrane segment spans residues 256–276 (IFLFCVTIGAFYPAGHSCILI). The Cytoplasmic portion of the chain corresponds to 277-295 (WGNQKLKQFLLLFLRQMKC).

Belongs to the G-protein coupled receptor T2R family.

The protein localises to the membrane. Functionally, putative taste receptor which may play a role in the perception of bitterness. In Rattus norvegicus (Rat), this protein is Taste receptor type 2 member 120.